A 250-amino-acid chain; its full sequence is 1-(5-phosphoribosyl)-5-[(5-phosphoribosylamino)methylideneamino] imidazole-4-carboxamide isomerase (250 aa).

Asp7 (proton acceptor) is an active-site residue. Catalysis depends on Asp129, which acts as the Proton donor.

This sequence belongs to the HisA/HisF family.

It localises to the cytoplasm. The enzyme catalyses 1-(5-phospho-beta-D-ribosyl)-5-[(5-phospho-beta-D-ribosylamino)methylideneamino]imidazole-4-carboxamide = 5-[(5-phospho-1-deoxy-D-ribulos-1-ylimino)methylamino]-1-(5-phospho-beta-D-ribosyl)imidazole-4-carboxamide. It participates in amino-acid biosynthesis; L-histidine biosynthesis; L-histidine from 5-phospho-alpha-D-ribose 1-diphosphate: step 4/9. This chain is 1-(5-phosphoribosyl)-5-[(5-phosphoribosylamino)methylideneamino] imidazole-4-carboxamide isomerase, found in Shewanella denitrificans (strain OS217 / ATCC BAA-1090 / DSM 15013).